The primary structure comprises 294 residues: Glutamyl-Q tRNA(Asp) synthetase (294 aa).

L-glutamate-binding positions include 8–12 and glutamate 44; that span reads RFAPT. The short motif at 11–21 is the 'HIGH' region element; sequence PTPSGYLHFGS. Zn(2+) contacts are provided by cysteine 100, cysteine 102, tyrosine 114, and cysteine 118. L-glutamate is bound by residues tyrosine 171 and arginine 189. Positions 227–231 match the 'KMSKS' region motif; sequence KLGKS. Lysine 230 contacts ATP.

Belongs to the class-I aminoacyl-tRNA synthetase family. GluQ subfamily. The cofactor is Zn(2+).

Its function is as follows. Catalyzes the tRNA-independent activation of glutamate in presence of ATP and the subsequent transfer of glutamate onto a tRNA(Asp). Glutamate is transferred on the 2-amino-5-(4,5-dihydroxy-2-cyclopenten-1-yl) moiety of the queuosine in the wobble position of the QUC anticodon. The protein is Glutamyl-Q tRNA(Asp) synthetase of Ectopseudomonas mendocina (strain ymp) (Pseudomonas mendocina).